A 122-amino-acid chain; its full sequence is High-potential iron-sulfur protein (122 aa).

Residues 1-37 form the signal peptide; it reads MSDKPISKSRRDAVKVMLGTAAAIPMINLVGFGTARA. Residues Cys80, Cys83, Cys100, and Cys114 each contribute to the [4Fe-4S] cluster site.

It belongs to the high-potential iron-sulfur protein (HiPIP) family. In terms of assembly, homodimer.

Its subcellular location is the periplasm. Specific class of high-redox-potential 4Fe-4S ferredoxins. Functions in anaerobic electron transport in most purple and in some other photosynthetic bacteria and in at least one genus (Paracoccus) of halophilic, denitrifying bacteria. The polypeptide is High-potential iron-sulfur protein (hip) (Allochromatium vinosum (strain ATCC 17899 / DSM 180 / NBRC 103801 / NCIMB 10441 / D) (Chromatium vinosum)).